Here is a 319-residue protein sequence, read N- to C-terminus: Insulin gene enhancer protein ISL-2 (319 aa).

2 LIM zinc-binding domains span residues 1–43 and 52–106; these read FLLR…CKRD and CAQC…RADH. Disordered stretches follow at residues 106-151, 218-237, and 286-319; these read HGPP…EKTT, QQHSDKTSLQGLTGTPLVAG, and ESGSLGTSSGSDVTSLSSQLPDTPNSMVPSPAET. Residues 150-209 constitute a DNA-binding region (homeobox); that stretch reads TTRVRTVLNEKQLHTLRTCYAANPRPDALMKEQLVEMTGLSPRVIRVWFQNKRCKDKKKS. The segment covering 218–230 has biased composition (polar residues); the sequence is QQHSDKTSLQGLT. Residues 286–303 show a composition bias toward low complexity; that stretch reads ESGSLGTSSGSDVTSLSS. The span at 304–319 shows a compositional bias: polar residues; that stretch reads QLPDTPNSMVPSPAET.

It is found in the nucleus. In terms of biological role, transcriptional factor that defines subclasses of motoneurons that segregate into columns in the spinal cord and select distinct axon pathways. Acts in conjunction with LIM-1, LIM-3 and ISL-1. The sequence is that of Insulin gene enhancer protein ISL-2 (ISL2) from Gallus gallus (Chicken).